Consider the following 180-residue polypeptide: uncharacterized protein (180 aa).

Positions 1 to 30 are cleaved as a signal peptide; sequence MRHKIITFILAVVVIIIIGNMIGGGGGSEA. Residues 25–46 are disordered; the sequence is GGGSEATSKTSSSSKAETEKTY. Low complexity predominate over residues 29-39; that stretch reads EATSKTSSSSK.

The protein localises to the secreted. This is an uncharacterized protein from Bacillus subtilis (strain 168).